A 63-amino-acid polypeptide reads, in one-letter code: Toxin Cn11 (63 aa).

The 62-residue stretch at 2–63 folds into the LCN-type CS-alpha/beta domain; the sequence is RDGYPVDEKG…KVWTYETNTC (62 aa). Disulfide bonds link C12–C63, C16–C37, C23–C44, and C27–C46.

This sequence belongs to the long (4 C-C) scorpion toxin superfamily. Sodium channel inhibitor family. Expressed by the venom gland.

The protein resides in the secreted. In terms of biological role, first blocker of sodium channels (Nav) found in scorpions. Is lethal to crustaceans (Cambarellus montezumae), less toxic to insects (crickets) and non-toxic to mammals (mice) at the doses assayed. This is Toxin Cn11 from Centruroides noxius (Mexican scorpion).